The chain runs to 353 residues: Protein Wnt-11b (353 aa).

The signal sequence occupies residues 1–22; that stretch reads MAPTRHWVTPLLLLCCSGICGA. Residues Asn-31, Asn-38, and Asn-88 are each glycosylated (N-linked (GlcNAc...) asparagine). Disulfide bonds link Cys-78-Cys-89, Cys-128-Cys-136, Cys-138-Cys-155, Cys-208-Cys-222, and Cys-210-Cys-217. Ser-214 carries the O-palmitoleoyl serine; by PORCN lipid modification. Sulfotyrosine occurs at positions 274 and 281. 6 disulfides stabilise this stretch: Cys-282–Cys-313, Cys-298–Cys-308, Cys-312–Cys-352, Cys-328–Cys-343, Cys-330–Cys-340, and Cys-335–Cys-336. The N-linked (GlcNAc...) asparagine glycan is linked to Asn-299.

This sequence belongs to the Wnt family. Homodimer. Secreted homodimers form a complex with wnt5a homodimers; tyrosine sulfation of both wnt11 and wnt5a by tpst1 is required for this interaction. Interacts with the transmembrane receptor fzd7/fz7. Interacts with lrp6 and ryk. Interacts with tdgf1/frl1. Interacts weakly with frzb1 and strongly with frzb2/crescent. Interaction with frzb2/crescent antagonizes wnt11 function in the neuroectoderm, but enhances it in mesodermal tissue. Glycosylation is required for protein secretion. Post-translationally, palmitoleoylation is required for efficient binding to frizzled receptors. Depalmitoleoylation leads to Wnt signaling pathway inhibition. As to expression, transcripts are expressed ubiquitously in early oocytes but become vegetally localized during mid-oogenesis then enriched on the dorsal side by the 8 to 16 cell stage. The protein becomes asymmetrically concentrated on the dorsal side by the 64-cell stage. During gastrulation, expressed in the lateral and ventral marginal zone, and during tadpole stages in the somites and first branchial arch. Weakly expressed in the pronephros from at least stage 12.5, with kidney expression increasing until stage 35. Expressed in the prospective posterior gut between stages 13 and 20, and in the deep foregut endoderm. Prior to neural crest cell migration, expressed in a domain flanking the neural crest on the lateral or epidermal side (the opposite side to wnt11/wnt11-r).

It localises to the secreted. The protein resides in the extracellular space. It is found in the extracellular matrix. Functionally, ligand for the frizzled7 transmembrane receptor. Primarily acts via non-canonical Wnt pathways mediated by either Ca(2+) and PKC, or by JNK and dvl2/dsh. Depending on the cellular context, can also signal via the canonical Wnt pathway mediated by beta-catenin and dvl2/dsh. May also inhibit canonical Wnt signaling. Maternally initiates dorsal/ventral axis formation by a canonical route, which signals via lrp6. In a complex with wnt5a, activates the canonical and non-canonical processes involved in axis formation. In the non-canonical pathway, acts through fzd7/fz7 to induce phosphorylation of dvl2/dsh. Signals through a non-canonical Wnt pathway to regulate convergent extension movements during gastrulation. Interactions with the secreted Wnt antagonist sfrp5 to coordinate foregut development, acting via a non-canonical Wnt pathway whereby sfrp5 restricts wnt11b activity to prevent inappropriate foregut formation. Mediates cardiogenesis via non-canonical Wnt signaling involving JNK-activation and PKC. Acts redundantly with wnt11/wnt11r during pronephros induction. The sequence is that of Protein Wnt-11b (wnt11b) from Xenopus laevis (African clawed frog).